Here is a 228-residue protein sequence, read N- to C-terminus: Cytochrome c oxidase subunit 2 (228 aa).

Residues 1–26 are Mitochondrial intermembrane-facing; it reads MPNWGQVMFQDAASSVMLQLVSFHDH. A helical membrane pass occupies residues 27 to 47; the sequence is ALLVLTLVLTVVGYALLALML. The Mitochondrial matrix portion of the chain corresponds to 48–60; that stretch reads NKQVNRYIMEAQT. Residues 61–81 form a helical membrane-spanning segment; sequence VETIWTILPALILLVLALPSL. At 82-228 the chain is on the mitochondrial intermembrane side; sequence RILYITDEVS…FMSWVSNFKP (147 aa). Histidine 161, cysteine 196, glutamate 198, cysteine 200, histidine 204, and methionine 207 together coordinate Cu cation. Glutamate 198 serves as a coordination point for Mg(2+).

The protein belongs to the cytochrome c oxidase subunit 2 family. As to quaternary structure, component of the cytochrome c oxidase (complex IV, CIV), a multisubunit enzyme composed of a catalytic core of 3 subunits and several supernumerary subunits. The complex exists as a monomer or a dimer and forms supercomplexes (SCs) in the inner mitochondrial membrane with ubiquinol-cytochrome c oxidoreductase (cytochrome b-c1 complex, complex III, CIII). Cu cation is required as a cofactor.

The protein resides in the mitochondrion inner membrane. The enzyme catalyses 4 Fe(II)-[cytochrome c] + O2 + 8 H(+)(in) = 4 Fe(III)-[cytochrome c] + 2 H2O + 4 H(+)(out). In terms of biological role, component of the cytochrome c oxidase, the last enzyme in the mitochondrial electron transport chain which drives oxidative phosphorylation. The respiratory chain contains 3 multisubunit complexes succinate dehydrogenase (complex II, CII), ubiquinol-cytochrome c oxidoreductase (cytochrome b-c1 complex, complex III, CIII) and cytochrome c oxidase (complex IV, CIV), that cooperate to transfer electrons derived from NADH and succinate to molecular oxygen, creating an electrochemical gradient over the inner membrane that drives transmembrane transport and the ATP synthase. Cytochrome c oxidase is the component of the respiratory chain that catalyzes the reduction of oxygen to water. Electrons originating from reduced cytochrome c in the intermembrane space (IMS) are transferred via the dinuclear copper A center (CU(A)) of subunit 2 and heme A of subunit 1 to the active site in subunit 1, a binuclear center (BNC) formed by heme A3 and copper B (CU(B)). The BNC reduces molecular oxygen to 2 water molecules using 4 electrons from cytochrome c in the IMS and 4 protons from the mitochondrial matrix. This chain is Cytochrome c oxidase subunit 2 (COII), found in Lumbricus terrestris (Common earthworm).